The following is a 259-amino-acid chain: Enkurin (259 aa).

2 disordered regions span residues 1–26 (MVAM…EPPQ) and 76–98 (PPKK…TDHP). Basic and acidic residues predominate over residues 76-88 (PPKKKFEWNERRK). The SH3-binding signature appears at 86 to 92 (RRKPPVP). Residues 163-255 (KRNEEVKKAQ…VLEKHKVIYI (93 aa)) form the Enkurin domain. An interaction with TRPC proteins region spans residues 163 to 258 (KRNEEVKKAQ…KHKVIYIANK (96 aa)). Residues 179–190 (IQENLRKAAMKR) enclose the IQ domain.

As to quaternary structure, microtubule inner protein component of sperm flagellar doublet microtubules. Binds calmodulin via its IQ domain. Interacts with TRPC1, TRPC2, TRPC5, but not TRPC3. Interacts with CFAP45. Expressed in trachea multiciliated cells.

The protein resides in the cytoplasm. It is found in the cytoskeleton. It localises to the flagellum axoneme. Its subcellular location is the cilium axoneme. Functionally, adapter that functions to localize a calcium-sensitive signal transduction machinery in sperm to a calcium-permeable ion channel. Microtubule inner protein (MIP) part of the dynein-decorated doublet microtubules (DMTs) in cilia axoneme, which is required for motile cilia beating. The chain is Enkurin (ENKUR) from Bos taurus (Bovine).